A 316-amino-acid polypeptide reads, in one-letter code: MIKLGIIMDPISSIKIKKDTSFSIMLEAQKRNYFLYYIEMKDIYYEVGEVYANSYLISVKYDEKKWYSFKKKYTINLKELDVILMRKDPPFDIEFLYITYILEHIENFGVLIINKPKSLRDYNEKISTLSFKYSPKTLISCSKKAIYSFQEKFGDIILKPINKMGGDSVFYVKKNDPNVSVIIDQLTNYGNSFCLIQEYIKEILNGDRRIIMINGSPLPYCLVRIPNDKEIRGNLAAGASFDILPLRKIDYEISNNISSFLKDKGLIFVGLDIIGNYLTEINITSPTGINEIESVYKVSISGILLDSIEKLLNIKH.

Residues 123-309 (NEKISTLSFK…ISGILLDSIE (187 aa)) form the ATP-grasp domain. Residue 149-206 (FQEKFGDIILKPINKMGGDSVFYVKKNDPNVSVIIDQLTNYGNSFCLIQEYIKEILNG) coordinates ATP. Residues Glu-280 and Asn-282 each coordinate Mg(2+).

Belongs to the prokaryotic GSH synthase family. Requires Mg(2+) as cofactor. The cofactor is Mn(2+).

It carries out the reaction gamma-L-glutamyl-L-cysteine + glycine + ATP = glutathione + ADP + phosphate + H(+). The protein operates within sulfur metabolism; glutathione biosynthesis; glutathione from L-cysteine and L-glutamate: step 2/2. This Wigglesworthia glossinidia brevipalpis protein is Glutathione synthetase.